A 541-amino-acid chain; its full sequence is Glucose-6-phosphate isomerase (541 aa).

The active-site Proton donor is the E346. Residues H377 and K506 contribute to the active site.

The protein belongs to the GPI family.

The protein resides in the cytoplasm. It carries out the reaction alpha-D-glucose 6-phosphate = beta-D-fructose 6-phosphate. Its pathway is carbohydrate biosynthesis; gluconeogenesis. The protein operates within carbohydrate degradation; glycolysis; D-glyceraldehyde 3-phosphate and glycerone phosphate from D-glucose: step 2/4. In terms of biological role, catalyzes the reversible isomerization of glucose-6-phosphate to fructose-6-phosphate. The sequence is that of Glucose-6-phosphate isomerase from Rhizobium meliloti (strain 1021) (Ensifer meliloti).